Consider the following 378-residue polypeptide: Cytochrome P450 monooxygenase pytD (378 aa).

Position 321 (Cys321) interacts with heme.

This sequence belongs to the cytochrome P450 family. Requires heme as cofactor.

It functions in the pathway secondary metabolite biosynthesis. Its function is as follows. Cytochrome P450 monooxygenase pytD; part of the gene cluster that mediates the biosynthesis of pyranterreones, a family of antioxidative compounds. The first step of pyranonigrins biosynthesis is performed by the hybrid PKS-NRPS synthetase pytA that condenses 4 malonyl-CoA units ato the acetyl starter unit by the modular PKS of pytA. The acyl chain is then connected to an L-serine through the amide bond by the modular NRPS of pytA. A tetramic acid is formed and released from the PKS-NRPS pytA to give pyranterreone 5 with the help of the thioesterase pytI. Pyranterreone 5 could be methylated by pytC to afford pyranterreone 6. Both pyranterreones 5 and 6 are subsequently oxidized by the FAD-linked oxidoreductase pytB and the cytochrome P450 monooxygenase pytD to form the fused gamma-pyrone core, resulting in pyranterreones 7 and 11, respectively. The hydroxy group at C-8 of pyranterreones 7 and 11 are dehydrated by the aspartyl protease pytH to form a delta-7 double bond to give pyranterreones 3 and 1, 2 accordingly. The exo-methylene of pyranterreone 3 could be reduced into a pendant methyl by reductase pytE to provide pyranterreone 4, also known as cordylactam. Pyranterreone 4 can be reconverted to pyranterreone 3 through pytB-catalyzed dehydrogenation or further oxidized to pyranterreones 9 and 10. This chain is Cytochrome P450 monooxygenase pytD, found in Aspergillus terreus (strain NIH 2624 / FGSC A1156).